The sequence spans 1556 residues: uncharacterized protein (1556 aa).

Position 2 is an N-acetylserine (Ser2). Positions 145-156 (NQLENRKSLERK) are enriched in basic and acidic residues. Residues 145-170 (NQLENRKSLERKPSRKRRKKNSNVND) form a disordered region. The region spanning 378 to 583 (SGDYPVCAKG…MIMSYLKLHP (206 aa)) is the Helicase ATP-binding domain. Position 391–398 (391–398 (EEMGLGKT)) interacts with ATP. Ser810 bears the Phosphoserine mark. The segment at 810 to 850 (SEDEDEHMDERFGEKETSSGDESDREINGAKNHDNHNNDGM) is disordered. 2 stretches are compositionally biased toward basic and acidic residues: residues 817 to 827 (MDERFGEKETS) and 834 to 846 (REINGAKNHDNHN). The RING-type zinc-finger motif lies at 1239-1277 (CSICLGEVEIGAIIKCGHYFCKSCILTWLRAHSKCPICK). The segment covering 1297 to 1309 (REKEIQEPRREGA) has biased composition (basic and acidic residues). Disordered stretches follow at residues 1297–1319 (REKEIQEPRREGADSSQDNSNEN) and 1508–1534 (EKSKKGDKYDEAQDETDNEESDDAKFE). The segment covering 1310–1319 (DSSQDNSNEN) has biased composition (low complexity). One can recognise a Helicase C-terminal domain in the interval 1363-1531 (KLISYLRLKS…ETDNEESDDA (169 aa)). A compositionally biased stretch (basic and acidic residues) spans 1508–1518 (EKSKKGDKYDE). Residues 1519–1529 (AQDETDNEESD) show a composition bias toward acidic residues.

It belongs to the SNF2/RAD54 helicase family.

The protein resides in the nucleus. In terms of biological role, is probably involved in a pathway contributing to genomic integrity. This is an uncharacterized protein from Saccharomyces cerevisiae (strain ATCC 204508 / S288c) (Baker's yeast).